We begin with the raw amino-acid sequence, 145 residues long: Large ribosomal subunit protein bL9 (145 aa).

It belongs to the bacterial ribosomal protein bL9 family.

Functionally, binds to the 23S rRNA. In Mesomycoplasma hyopneumoniae (strain J / ATCC 25934 / NCTC 10110) (Mycoplasma hyopneumoniae), this protein is Large ribosomal subunit protein bL9.